The primary structure comprises 214 residues: Uridine kinase (214 aa).

11-18 (GGSGSGKT) serves as a coordination point for ATP.

It belongs to the uridine kinase family.

Its subcellular location is the cytoplasm. The catalysed reaction is uridine + ATP = UMP + ADP + H(+). The enzyme catalyses cytidine + ATP = CMP + ADP + H(+). The protein operates within pyrimidine metabolism; CTP biosynthesis via salvage pathway; CTP from cytidine: step 1/3. Its pathway is pyrimidine metabolism; UMP biosynthesis via salvage pathway; UMP from uridine: step 1/1. This chain is Uridine kinase, found in Brevibacillus brevis (strain 47 / JCM 6285 / NBRC 100599).